The primary structure comprises 200 residues: Neutrophil gelatinase-associated lipocalin (200 aa).

Positions 1-20 are cleaved as a signal peptide; the sequence is MALSVMCLGLALLGVLQSQA. At glutamine 21 the chain carries Pyrrolidone carboxylic acid. Position 72 to 74 (72 to 74) interacts with a carboxymycobactin; it reads YST. 2 N-linked (GlcNAc...) asparagine glycosylation sites follow: asparagine 81 and asparagine 85. Cysteine 98 and cysteine 197 are disulfide-bonded. Enterobactin is bound at residue tyrosine 128. The a carboxymycobactin site is built by lysine 147, lysine 156, and tyrosine 160. Lysine 156 lines the enterobactin pocket.

Belongs to the calycin superfamily. Lipocalin family. As to quaternary structure, monomer. Homodimer; disulfide-linked. Heterodimer; disulfide-linked with MMP9. N-glycosylated. As to expression, expressed in the cortical tubules of the kidney (at protein level). Also expressed in the medullary tubules of the kidney. Detected in lung, spleen, uterus, vagina and epididymis.

It is found in the secreted. It localises to the cytoplasmic granule lumen. Its subcellular location is the cytoplasmic vesicle lumen. Iron-trafficking protein involved in multiple processes such as apoptosis, innate immunity and renal development. Binds iron through association with 2,3-dihydroxybenzoic acid (2,3-DHBA), a siderophore that shares structural similarities with bacterial enterobactin, and delivers or removes iron from the cell, depending on the context. Iron-bound form (holo-24p3) is internalized following binding to the SLC22A17 (24p3R) receptor, leading to release of iron and subsequent increase of intracellular iron concentration. In contrast, association of the iron-free form (apo-24p3) with the SLC22A17 (24p3R) receptor is followed by association with an intracellular siderophore, iron chelation and iron transfer to the extracellular medium, thereby reducing intracellular iron concentration. Involved in apoptosis due to interleukin-3 (IL3) deprivation: iron-loaded form increases intracellular iron concentration without promoting apoptosis, while iron-free form decreases intracellular iron levels, inducing expression of the proapoptotic protein BCL2L11/BIM, resulting in apoptosis. Involved in innate immunity; limits bacterial proliferation by sequestering iron bound to microbial siderophores, such as enterobactin. Can also bind siderophores from M.tuberculosis. The polypeptide is Neutrophil gelatinase-associated lipocalin (Lcn2) (Mus musculus (Mouse)).